The sequence spans 242 residues: NH(3)-dependent NAD(+) synthetase (242 aa).

27–34 (GISGGIDS) contacts ATP. A Mg(2+)-binding site is contributed by Asp-33. Arg-109 is a binding site for deamido-NAD(+). Position 129 (Thr-129) interacts with ATP. Residue Glu-134 participates in Mg(2+) binding. Deamido-NAD(+) is bound by residues Lys-142 and Asp-149. ATP-binding residues include Lys-158 and Thr-180. Position 231–232 (231–232 (HK)) interacts with deamido-NAD(+).

This sequence belongs to the NAD synthetase family. In terms of assembly, homodimer.

It carries out the reaction deamido-NAD(+) + NH4(+) + ATP = AMP + diphosphate + NAD(+) + H(+). It functions in the pathway cofactor biosynthesis; NAD(+) biosynthesis; NAD(+) from deamido-NAD(+) (ammonia route): step 1/1. Catalyzes the ATP-dependent amidation of deamido-NAD to form NAD. Uses ammonia as a nitrogen source. The protein is NH(3)-dependent NAD(+) synthetase of Thermoplasma volcanium (strain ATCC 51530 / DSM 4299 / JCM 9571 / NBRC 15438 / GSS1).